The sequence spans 340 residues: Solute carrier family 35 member G3 (340 aa).

Residues 11–33 (PDFTQPSPPSTPASLPSKHHHRC) are disordered. 9 helical membrane-spanning segments follow: residues 39 to 59 (TKGL…VGPF), 69 to 89 (LPSL…ALLL), 107 to 127 (FLHA…VQVV), 160 to 180 (AWCG…PGLG), 189 to 209 (LYTA…SLGL), 223 to 243 (TVAF…LFVL), 257 to 277 (CVVA…YAVT), 283 to 303 (LVCA…YYVL), and 307 to 327 (VAPS…IITA). An EamA 1 domain is found at 51-176 (LSAGFVGPFS…STLGLIIIVG (126 aa)). The EamA 2 domain occupies 274–327 (YAVTKAHPALVCAVLHSEVVVALMLQYYVLYETVAPSDIMGAGVVLGSIAIITA).

Belongs to the SLC35G solute transporter family.

It is found in the membrane. The protein is Solute carrier family 35 member G3 (Slc35g3) of Mus musculus (Mouse).